Consider the following 519-residue polypeptide: Threonine synthase, chloroplastic (519 aa).

A chloroplast-targeting transit peptide spans 1–40; it reads MAASCMLRSSFISPGLPQLHHQSTSKPNNGIHFFTPIKAT. Lysine 196 is subject to N6-(pyridoxal phosphate)lysine. Pyridoxal 5'-phosphate-binding positions include 328–332 and threonine 465; that span reads GNLGN.

The protein belongs to the threonine synthase family. Homodimer. It depends on pyridoxal 5'-phosphate as a cofactor.

The protein localises to the plastid. It is found in the chloroplast. The catalysed reaction is O-phospho-L-homoserine + H2O = L-threonine + phosphate. It participates in amino-acid biosynthesis; L-threonine biosynthesis; L-threonine from L-aspartate: step 5/5. With respect to regulation, allosterically activated by S-adenosyl-methionine (SAM). Catalyzes the gamma-elimination of phosphate from L-phosphohomoserine and the beta-addition of water to produce L-threonine. The sequence is that of Threonine synthase, chloroplastic from Solanum tuberosum (Potato).